A 360-amino-acid chain; its full sequence is Phospho-N-acetylmuramoyl-pentapeptide-transferase (360 aa).

The next 10 membrane-spanning stretches (helical) occupy residues 27-47 (GAMI…INSL), 71-91 (TPTM…LLWA), 93-113 (LASV…AIGF), 128-148 (FSGK…AFTI), 168-188 (LVIN…VGAG), 199-219 (GLAI…AYLS), 239-259 (LAVV…FNAP), 262-282 (AIFM…TVAV), 288-308 (IVLA…IIQV), and 337-357 (QVVI…LSTL).

This sequence belongs to the glycosyltransferase 4 family. MraY subfamily. Mg(2+) serves as cofactor.

It is found in the cell inner membrane. The enzyme catalyses UDP-N-acetyl-alpha-D-muramoyl-L-alanyl-gamma-D-glutamyl-meso-2,6-diaminopimeloyl-D-alanyl-D-alanine + di-trans,octa-cis-undecaprenyl phosphate = di-trans,octa-cis-undecaprenyl diphospho-N-acetyl-alpha-D-muramoyl-L-alanyl-D-glutamyl-meso-2,6-diaminopimeloyl-D-alanyl-D-alanine + UMP. Its pathway is cell wall biogenesis; peptidoglycan biosynthesis. In terms of biological role, catalyzes the initial step of the lipid cycle reactions in the biosynthesis of the cell wall peptidoglycan: transfers peptidoglycan precursor phospho-MurNAc-pentapeptide from UDP-MurNAc-pentapeptide onto the lipid carrier undecaprenyl phosphate, yielding undecaprenyl-pyrophosphoryl-MurNAc-pentapeptide, known as lipid I. This Brucella ovis (strain ATCC 25840 / 63/290 / NCTC 10512) protein is Phospho-N-acetylmuramoyl-pentapeptide-transferase.